Here is a 305-residue protein sequence, read N- to C-terminus: Glycine--tRNA ligase alpha subunit (305 aa).

The protein belongs to the class-II aminoacyl-tRNA synthetase family. In terms of assembly, tetramer of two alpha and two beta subunits.

Its subcellular location is the cytoplasm. The enzyme catalyses tRNA(Gly) + glycine + ATP = glycyl-tRNA(Gly) + AMP + diphosphate. The sequence is that of Glycine--tRNA ligase alpha subunit from Streptococcus mutans serotype c (strain ATCC 700610 / UA159).